The primary structure comprises 366 residues: Chorismate synthase (366 aa).

NADP(+) contacts are provided by Arg48 and Arg54. FMN contacts are provided by residues 125 to 127 (RSS), 238 to 239 (NA), Gly278, 293 to 297 (KPTSS), and Arg319.

This sequence belongs to the chorismate synthase family. In terms of assembly, homotetramer. It depends on FMNH2 as a cofactor.

The catalysed reaction is 5-O-(1-carboxyvinyl)-3-phosphoshikimate = chorismate + phosphate. It functions in the pathway metabolic intermediate biosynthesis; chorismate biosynthesis; chorismate from D-erythrose 4-phosphate and phosphoenolpyruvate: step 7/7. Functionally, catalyzes the anti-1,4-elimination of the C-3 phosphate and the C-6 proR hydrogen from 5-enolpyruvylshikimate-3-phosphate (EPSP) to yield chorismate, which is the branch point compound that serves as the starting substrate for the three terminal pathways of aromatic amino acid biosynthesis. This reaction introduces a second double bond into the aromatic ring system. The chain is Chorismate synthase from Neisseria gonorrhoeae (strain NCCP11945).